The following is a 164-amino-acid chain: Ribosome-binding factor A (164 aa).

Positions 123–164 (ARDLGVPPSGEDDGDDEADDEDDDGGEEGPGAAAPPPADEGR) are disordered. Acidic residues predominate over residues 132–149 (GEDDGDDEADDEDDDGGE). Positions 155 to 164 (AAPPPADEGR) are enriched in pro residues.

It belongs to the RbfA family. In terms of assembly, monomer. Binds 30S ribosomal subunits, but not 50S ribosomal subunits or 70S ribosomes.

The protein localises to the cytoplasm. Its function is as follows. One of several proteins that assist in the late maturation steps of the functional core of the 30S ribosomal subunit. Associates with free 30S ribosomal subunits (but not with 30S subunits that are part of 70S ribosomes or polysomes). Required for efficient processing of 16S rRNA. May interact with the 5'-terminal helix region of 16S rRNA. The polypeptide is Ribosome-binding factor A (Rhodospirillum rubrum (strain ATCC 11170 / ATH 1.1.1 / DSM 467 / LMG 4362 / NCIMB 8255 / S1)).